Here is a 233-residue protein sequence, read N- to C-terminus: 7-cyano-7-deazaguanine synthase (233 aa).

ATP is bound at residue C7–A17. Positions 185, 193, 196, and 199 each coordinate Zn(2+).

It belongs to the QueC family. It depends on Zn(2+) as a cofactor.

The catalysed reaction is 7-carboxy-7-deazaguanine + NH4(+) + ATP = 7-cyano-7-deazaguanine + ADP + phosphate + H2O + H(+). The protein operates within purine metabolism; 7-cyano-7-deazaguanine biosynthesis. Its function is as follows. Catalyzes the ATP-dependent conversion of 7-carboxy-7-deazaguanine (CDG) to 7-cyano-7-deazaguanine (preQ(0)). This Paracoccus denitrificans (strain Pd 1222) protein is 7-cyano-7-deazaguanine synthase.